The following is a 1004-amino-acid chain: Putative helicase MOV-10 (1004 aa).

Position 148 is an N6-acetyllysine (K148). T254 bears the Phosphothreonine mark. S433 carries the phosphoserine modification. Residue 525–532 (GPPGTGKT) participates in ATP binding. A DEAG box motif is present at residues 646 to 649 (DEAG). The tract at residues 922–966 (NPLLLGHDPDWKTFLEFCKENGGYTGCPFPAKLDLQQGQDLLQGL) is interaction with AGO2 and APOBEC3G. Positions 966-1004 (LSKLSPSTSGPRRHQNLPQEREGEGGLPLQVEPEWRNEL) are disordered. S970 is modified (phosphoserine).

The protein belongs to the DNA2/NAM7 helicase family. SDE3 subfamily. In terms of assembly, interacts with DICER1, AGO2, TARBP2, EIF6 and RPL7A (60S ribosome subunit); they form a large RNA-induced silencing complex (RISC). Interacts with APOBEC3G in an RNA-dependent manner. Interacts with TRIM71 (via NHL repeats) in an RNA-dependent manner. Interacts with both protein products of LIRE1, ORF1p and ORF2p. Interacts with TUT4 and, to a lesser extent, TUT7; the interactions are RNA-dependent. Interacts with AGO2, TNRC6B and UPF1; the interactions are direct and RNA-dependent. Interacts with FMR1; this interaction is direct, occurs in an RNA-dependent manner on polysomes and induces association of MOV10 with RNAs. Interacts with SHFL; the interaction increases in presence of RNA. Interacts with DHX34; the interaction is RNA-independent. Interacts with RBM46. Ubiquitinated by the DCX(DCAF12) complex that specifically recognizes the glutamate-leucine (Glu-Leu) degron at the C-terminus, leading to its degradation.

The protein resides in the cytoplasm. It localises to the P-body. Its subcellular location is the nucleus. The protein localises to the cytoplasmic ribonucleoprotein granule. It is found in the stress granule. The catalysed reaction is ATP + H2O = ADP + phosphate + H(+). 5' to 3' RNA helicase that is involved in a number of cellular roles ranging from mRNA metabolism and translation, modulation of viral infectivity, inhibition of retrotransposition, or regulation of synaptic transmission. Plays an important role in innate antiviral immunity by promoting type I interferon production. Mechanistically, specifically uses IKKepsilon/IKBKE as the mediator kinase for IRF3 activation. Contributes to UPF1 mRNA target degradation by translocation along 3' UTRs. Required for microRNA (miRNA)-mediated gene silencing by the RNA-induced silencing complex (RISC). Required for both miRNA-mediated translational repression and miRNA-mediated cleavage of complementary mRNAs by RISC. In cooperation with FMR1, regulates miRNA-mediated translational repression by AGO2. Restricts retrotransposition of long interspersed element-1 (LINE-1) in cooperation with TUT4 and TUT7 counteracting the RNA chaperonne activity of L1RE1. Facilitates LINE-1 uridylation by TUT4 and TUT7. Required for embryonic viability and for normal central nervous system development and function. Plays two critical roles in early brain development: suppresses retroelements in the nucleus by directly inhibiting cDNA synthesis, while regulates cytoskeletal mRNAs to influence neurite outgrowth in the cytosol. May function as a messenger ribonucleoprotein (mRNP) clearance factor. The protein is Putative helicase MOV-10 (Mov10) of Mus musculus (Mouse).